Here is a 63-residue protein sequence, read N- to C-terminus: Large ribosomal subunit protein uL29 (63 aa).

This sequence belongs to the universal ribosomal protein uL29 family.

In Pseudomonas fluorescens (strain ATCC BAA-477 / NRRL B-23932 / Pf-5), this protein is Large ribosomal subunit protein uL29.